A 655-amino-acid chain; its full sequence is MGIFSIANQHIRFAVKLACAIVLALFIGFHFQLETPRWAVLTAAIVAAGPAFAAGGEPYSGAIRYRGMLRIIGTFIGCIAALIIIISMIRAPLLMILVCCVWVGFCTWISSLVRIENSYAWGLSGYTALIIVITIQTEPLLTPQFALERCSEIVIGIGCAILADLLFSPRSIKQEVDRELDSLLVAQYQLMQLCIKHGDSEEVDNAWGDLVRRTAALEGMRSNLNMESSRWVRANRRLKALNTLSLTLITQSCETYLIQNTRPELITDTFRELFETPVETVQDVHRQLKRMRRVIVWTGERETPVTLYSWVGAATRYLLLKRGVISNTKISATEEEILQGEPVVKVESAERHHAMVNFWRTTLSCILGTLFWLWTGWTSGNGEMVMIAVVTSLAMRLPNPRMVCIDFIYGTLAALPLGLLYFLVIIPNTQQSMLLLCLSLAVLGFFIGIEVQKRRLGSMGALASTINIIVLDNPMTFHFSQFLDSALGQIVGCMLAFIVILLVRDKSKDRTGRVLLNQFVSAAVSAMTTNVVRRKENRLPALYQQLFLLMNKFPGDLPKFRLALTMIIAHQRLRDAPIPVNEDLSVFHRQLRRTADHVISAGSDDKRRRYFGQLLDELDIYQEKLRIWEAPPQVTEPVKRLTGMLHKYQNALTDS.

Residues 1–12 lie on the Periplasmic side of the membrane; the sequence is MGIFSIANQHIR. Residues 13 to 33 form a helical membrane-spanning segment; the sequence is FAVKLACAIVLALFIGFHFQL. Residues 34–37 are Cytoplasmic-facing; sequence ETPR. The chain crosses the membrane as a helical span at residues 38–58; sequence WAVLTAAIVAAGPAFAAGGEP. Over 59–68 the chain is Periplasmic; that stretch reads YSGAIRYRGM. The helical transmembrane segment at 69 to 89 threads the bilayer; it reads LRIIGTFIGCIAALIIIISMI. The Cytoplasmic portion of the chain corresponds to 90–92; the sequence is RAP. The chain crosses the membrane as a helical span at residues 93–113; sequence LLMILVCCVWVGFCTWISSLV. Over 114-120 the chain is Periplasmic; it reads RIENSYA. The chain crosses the membrane as a helical span at residues 121–141; the sequence is WGLSGYTALIIVITIQTEPLL. Residues 142–151 lie on the Cytoplasmic side of the membrane; it reads TPQFALERCS. The chain crosses the membrane as a helical span at residues 152–172; sequence EIVIGIGCAILADLLFSPRSI. The Periplasmic portion of the chain corresponds to 173–369; it reads KQEVDRELDS…RTTLSCILGT (197 aa). A helical transmembrane segment spans residues 370–390; the sequence is LFWLWTGWTSGNGEMVMIAVV. The Cytoplasmic segment spans residues 391–406; sequence TSLAMRLPNPRMVCID. Residues 407 to 427 form a helical membrane-spanning segment; sequence FIYGTLAALPLGLLYFLVIIP. The Periplasmic segment spans residues 428–430; sequence NTQ. A helical transmembrane segment spans residues 431–451; it reads QSMLLLCLSLAVLGFFIGIEV. Over 452-458 the chain is Cytoplasmic; that stretch reads QKRRLGS. A helical transmembrane segment spans residues 459–479; that stretch reads MGALASTINIIVLDNPMTFHF. Residues 480–481 lie on the Periplasmic side of the membrane; that stretch reads SQ. A helical transmembrane segment spans residues 482–502; it reads FLDSALGQIVGCMLAFIVILL. Over 503-655 the chain is Cytoplasmic; the sequence is VRDKSKDRTG…HKYQNALTDS (153 aa).

The protein belongs to the aromatic acid exporter ArAE (TC 2.A.85) family.

Its subcellular location is the cell inner membrane. Functionally, forms an efflux pump with AaeA. Could function as a metabolic relief valve, allowing to eliminate certain compounds when they accumulate to high levels in the cell. In Salmonella paratyphi A (strain ATCC 9150 / SARB42), this protein is p-hydroxybenzoic acid efflux pump subunit AaeB.